Here is a 100-residue protein sequence, read N- to C-terminus: RxLR effector protein SFI8 (100 aa).

An N-terminal signal peptide occupies residues 1–22 (MRSILYAVLAFAVLARSSAVAA). Positions 43–57 (RSLRVEAQEVIQSGR) match the RxLR-dEER motif. Positions 78–82 (KPDIK) match the Calmodulin-binding motif motif.

This sequence belongs to the RxLR effector family. In terms of assembly, interacts with the host calmodulin.

The protein localises to the secreted. Its subcellular location is the host nucleus. It localises to the host cytoplasm. Its function is as follows. Effector that suppresses flg22-induced post-translational MAP kinase activation both tomato and Arabidopsis. The perception of highly conserved pathogen- or microbe-associated molecular patterns (PAMPs/MAMPs), such as flg22, triggers converging signaling pathways recruiting MAP kinase cascades and inducing transcriptional re-programming, yielding a generic antimicrobial response. Associates with calmodulin to interfere with plant defense-associated calcium signaling in hosts. This Phytophthora infestans (strain T30-4) (Potato late blight agent) protein is RxLR effector protein SFI8.